A 689-amino-acid polypeptide reads, in one-letter code: Elongation factor G (689 aa).

Residues 9–283 form the tr-type G domain; sequence AKFRNIGIMA…AIIEFMPSPL (275 aa). GTP-binding positions include 18-25, 82-86, and 136-139; these read AHIDAGKT, DTPGH, and NKMD.

Belongs to the TRAFAC class translation factor GTPase superfamily. Classic translation factor GTPase family. EF-G/EF-2 subfamily.

It is found in the cytoplasm. Its function is as follows. Catalyzes the GTP-dependent ribosomal translocation step during translation elongation. During this step, the ribosome changes from the pre-translocational (PRE) to the post-translocational (POST) state as the newly formed A-site-bound peptidyl-tRNA and P-site-bound deacylated tRNA move to the P and E sites, respectively. Catalyzes the coordinated movement of the two tRNA molecules, the mRNA and conformational changes in the ribosome. The protein is Elongation factor G of Clostridium botulinum (strain Okra / Type B1).